A 590-amino-acid polypeptide reads, in one-letter code: Arginine--tRNA ligase (590 aa).

The short motif at 126–136 (PNVAKEMHVGH) is the 'HIGH' region element.

Belongs to the class-I aminoacyl-tRNA synthetase family. In terms of assembly, monomer.

Its subcellular location is the cytoplasm. The catalysed reaction is tRNA(Arg) + L-arginine + ATP = L-arginyl-tRNA(Arg) + AMP + diphosphate. The sequence is that of Arginine--tRNA ligase from Streptomyces avermitilis (strain ATCC 31267 / DSM 46492 / JCM 5070 / NBRC 14893 / NCIMB 12804 / NRRL 8165 / MA-4680).